A 330-amino-acid polypeptide reads, in one-letter code: Protein FAM170A (330 aa).

Disordered regions lie at residues 1-54 (MKRR…VTST), 76-104 (HRDSPQPQSPLAQVQERGETPPRSQHVSL), and 169-218 (VGTP…AKTP). A compositionally biased stretch (polar residues) spans 174-185 (SDVSTRNLLSDS). Residues 189–200 (GEEKEHEERTES) are compositionally biased toward basic and acidic residues. A Phosphothreonine modification is found at T217. Residues 228-252 (FRCMACCRVFTTMEALQEHVQFGIR) form a C2H2-type; degenerate zinc finger. The segment at 270–330 (NMESESTQDE…VFHSPKDRNS (61 aa)) is disordered. Residues 275-293 (STQDEQEEENGNEKEEEEK) are compositionally biased toward acidic residues. Phosphoserine is present on S315.

The protein belongs to the FAM170 family. Expressed strongly in testis and brain and weakly in prostate, spleen, pancreas and uterus.

It is found in the nucleus. Its function is as follows. Acts as a nuclear transcription factor that positively regulates the expression of heat shock genes. Binds to heat shock promoter elements (HSE). This Homo sapiens (Human) protein is Protein FAM170A (FAM170A).